Consider the following 418-residue polypeptide: Actin-related protein 3-A (418 aa).

This sequence belongs to the actin family. ARP3 subfamily. Component of the Arp2/3 complex composed of actr2/arp2, actr3/arp3, arpc1 (arpc1a or arpc1b), arpc2, arpc3, arpc4 and arpc5.

The protein localises to the cytoplasm. It is found in the cytoskeleton. The protein resides in the cell projection. Its subcellular location is the nucleus. Its function is as follows. ATP-binding component of the Arp2/3 complex, a multiprotein complex that mediates actin polymerization upon stimulation by nucleation-promoting factor (NPF). The Arp2/3 complex mediates the formation of branched actin networks in the cytoplasm, providing the force for cell motility. Seems to contact the pointed end of the daughter actin filament. In addition to its role in the cytoplasmic cytoskeleton, the Arp2/3 complex also promotes actin polymerization in the nucleus, thereby regulating gene transcription and repair of damaged DNA. The Arp2/3 complex promotes homologous recombination (HR) repair in response to DNA damage by promoting nuclear actin polymerization, leading to drive motility of double-strand breaks (DSBs). This is Actin-related protein 3-A from Xenopus laevis (African clawed frog).